The following is a 342-amino-acid chain: S-adenosylmethionine:tRNA ribosyltransferase-isomerase (342 aa).

This sequence belongs to the QueA family. Monomer.

The protein resides in the cytoplasm. The catalysed reaction is 7-aminomethyl-7-carbaguanosine(34) in tRNA + S-adenosyl-L-methionine = epoxyqueuosine(34) in tRNA + adenine + L-methionine + 2 H(+). Its pathway is tRNA modification; tRNA-queuosine biosynthesis. Transfers and isomerizes the ribose moiety from AdoMet to the 7-aminomethyl group of 7-deazaguanine (preQ1-tRNA) to give epoxyqueuosine (oQ-tRNA). This chain is S-adenosylmethionine:tRNA ribosyltransferase-isomerase, found in Listeria innocua serovar 6a (strain ATCC BAA-680 / CLIP 11262).